A 220-amino-acid chain; its full sequence is Ribosomal RNA large subunit methyltransferase E (220 aa).

S-adenosyl-L-methionine-binding residues include Gly60, Trp62, Asp92, Asp108, and Asp133. Lys173 acts as the Proton acceptor in catalysis. Residues Arg197 to Arg220 form a disordered region.

Belongs to the class I-like SAM-binding methyltransferase superfamily. RNA methyltransferase RlmE family.

The protein localises to the cytoplasm. The enzyme catalyses uridine(2552) in 23S rRNA + S-adenosyl-L-methionine = 2'-O-methyluridine(2552) in 23S rRNA + S-adenosyl-L-homocysteine + H(+). In terms of biological role, specifically methylates the uridine in position 2552 of 23S rRNA at the 2'-O position of the ribose in the fully assembled 50S ribosomal subunit. The polypeptide is Ribosomal RNA large subunit methyltransferase E (Burkholderia ambifaria (strain ATCC BAA-244 / DSM 16087 / CCUG 44356 / LMG 19182 / AMMD) (Burkholderia cepacia (strain AMMD))).